A 710-amino-acid chain; its full sequence is Homeobox-leucine zipper protein ROC8 (710 aa).

Residues 1–23 (MDFGDEPEGSDSQRRRKRYHRHT) form a disordered region. Over residues 14–23 (RRRKRYHRHT) the composition is skewed to basic residues. The segment at residues 15–74 (RRKRYHRHTPRQIQQLEAMFKECPHPDENQRAQLSRELGLEPRQIKFWFQNRRTQMKAQH) is a DNA-binding region (homeobox). The stretch at 82–144 (LRAENDKIRC…DRVSNLTSKY (63 aa)) forms a coiled coil. The 244-residue stretch at 197-440 (SDMERPMMAE…LQRACERYAS (244 aa)) folds into the START domain. The span at 630-648 (RPGSAAGASTSSAGPLAAA) shows a compositional bias: low complexity. Residues 630 to 650 (RPGSAAGASTSSAGPLAAARG) are disordered.

Belongs to the HD-ZIP homeobox family. Class IV subfamily.

It is found in the nucleus. Its function is as follows. Probable transcription factor. The chain is Homeobox-leucine zipper protein ROC8 (ROC8) from Oryza sativa subsp. japonica (Rice).